Reading from the N-terminus, the 301-residue chain is Transcription elongation factor A protein 1 (301 aa).

Residue M1 is modified to N-acetylmethionine. One can recognise a TFIIS N-terminal domain in the interval 3–80 (DEVVRIAKKM…KSWKKLLDGP (78 aa)). K55 is covalently cross-linked (Glycyl lysine isopeptide (Lys-Gly) (interchain with G-Cter in ubiquitin)). 4 positions are modified to phosphoserine: S57, S81, S97, and S100. A compositionally biased stretch (basic and acidic residues) spans 76–93 (LLDGPSTDKDPEEKKKEP). A disordered region spans residues 76 to 139 (LLDGPSTDKD…FPRAPSTSDS (64 aa)). Residues 140 to 256 (VRLKCREMLA…EHQMAKTGGT (117 aa)) enclose the TFIIS central domain. The TFIIS-type zinc-finger motif lies at 259 to 299 (DLFTCGKCKKKNCTYTQVQTRSADEPMTTFVVCNECGNRWK). Zn(2+)-binding residues include C263, C266, C291, and C294.

The protein belongs to the TFS-II family. In terms of assembly, interacts with EAF2. Associates with UBR5 and forms a transcription regulatory complex made of CDK9, Pol II, UBR5 and TCEA1/TFIIS. Part of TBP-based Pol II pre-initiation complex (PIC), in which Pol II core assembles with general transcription factors and other specific initiation factors including GTF2E1, GTF2E2, GTF2F1, GTF2F2, TCEA1, ERCC2, ERCC3, GTF2H2, GTF2H3, GTF2H4, GTF2H5, GTF2A1, GTF2A2, GTF2B and TBP; this large multi-subunit PIC complex mediates DNA unwinding and targets Pol II core to the transcription start site where the first phosphodiester bond forms.

The protein localises to the nucleus. Its function is as follows. Necessary for efficient RNA polymerase II transcription elongation past template-encoded arresting sites. The arresting sites in DNA have the property of trapping a certain fraction of elongating RNA polymerases that pass through, resulting in locked ternary complexes. Cleavage of the nascent transcript by S-II allows the resumption of elongation from the new 3'-terminus. The polypeptide is Transcription elongation factor A protein 1 (Tcea1) (Mus musculus (Mouse)).